Here is a 109-residue protein sequence, read N- to C-terminus: SRA stem-loop-interacting RNA-binding protein, mitochondrial (109 aa).

A Phosphoserine modification is found at S15. Positions 19 to 103 constitute an RRM domain; sequence PVAFVRRIPW…RRPKLPQTSD (85 aa). At T101 the chain carries Phosphothreonine. A Phosphoserine modification is found at S102.

In terms of tissue distribution, ubiquitously expressed, with highest level in heart, liver, skeletal muscle and testis.

It is found in the mitochondrion. It localises to the nucleus. Functionally, RNA-binding protein that acts as a nuclear receptor corepressor. Probably acts by binding the SRA RNA, and repressing the SRA-mediated nuclear receptor coactivation. Binds the STR7 loop of SRA RNA. Also able to repress glucocorticoid (GR), androgen (AR), thyroid (TR) and VDR-mediated transactivation. The polypeptide is SRA stem-loop-interacting RNA-binding protein, mitochondrial (SLIRP) (Homo sapiens (Human)).